Here is a 92-residue protein sequence, read N- to C-terminus: MKYGVLFMVSCGVMFLILSHVEEVEAMKKFGCNTTHPFPGKCGNNGKSSWVSDMKKLPSAPKNRDIRCECSDRPSLARGMPGERVCRCDYDC.

An N-terminal signal peptide occupies residues Met-1–Ala-26. Intrachain disulfides connect Cys-32–Cys-92, Cys-42–Cys-70, and Cys-68–Cys-88.

It belongs to the DEFL family.

Its subcellular location is the secreted. This Arabidopsis thaliana (Mouse-ear cress) protein is Putative defensin-like protein 225 (SCRL1).